We begin with the raw amino-acid sequence, 464 residues long: Plant intracellular Ras-group-related LRR protein 3 (464 aa).

Residues 106–138 (AAVVSLEEVHEGYEKQLRDLEEEIGRVYASAVE) adopt a coiled-coil conformation. 10 LRR repeats span residues 160-183 (GGVVERIDLSDHELKLLPDALGKI), 184-206 (VGLVSLNVSRNNLRFLPDTISGL), 207-230 (EKLEELDLSSNRLVFLPDSIGLLL), 232-252 (LRILNVTGNKLTLLPESIAQC), 254-275 (SLVELDASFNNLTSLPANFGYG), 276-299 (LLNLERLSIQLNKIRFFPNSICEM), 301-322 (SLRYLDAHMNEIHGLPIAIGRL), 323-347 (TNLEVMNLSSNFSDLIELPDTISDL), 348-370 (ANLRELDLSNNQIRVLPDSFFRL), and 372-393 (KLEKLNLDQNPLEYPPQEMVNQ). Residues 398–406 (VREFMRKRW) carry the GVYW; degenerate motif.

The protein belongs to the SHOC2 family. In terms of tissue distribution, widely expressed.

Functionally, leucine-rich repeat protein that likely mediates protein interactions, possibly in the context of signal transduction. The sequence is that of Plant intracellular Ras-group-related LRR protein 3 (PIRL3) from Arabidopsis thaliana (Mouse-ear cress).